A 39-amino-acid chain; its full sequence is Photosystem II reaction center protein L (39 aa).

A helical membrane pass occupies residues 18–38 (SLYLGLLFVFVTGVLMSSYFF).

This sequence belongs to the PsbL family. In terms of assembly, PSII is composed of 1 copy each of membrane proteins PsbA, PsbB, PsbC, PsbD, PsbE, PsbF, PsbH, PsbI, PsbJ, PsbK, PsbL, PsbM, PsbT, PsbX, PsbY, PsbZ, Psb30/Ycf12, peripheral proteins PsbO, CyanoQ (PsbQ), PsbU, PsbV and a large number of cofactors. It forms dimeric complexes.

It localises to the cellular thylakoid membrane. Its function is as follows. One of the components of the core complex of photosystem II (PSII). PSII is a light-driven water:plastoquinone oxidoreductase that uses light energy to abstract electrons from H(2)O, generating O(2) and a proton gradient subsequently used for ATP formation. It consists of a core antenna complex that captures photons, and an electron transfer chain that converts photonic excitation into a charge separation. This subunit is found at the monomer-monomer interface and is required for correct PSII assembly and/or dimerization. The sequence is that of Photosystem II reaction center protein L from Parasynechococcus marenigrum (strain WH8102).